Here is a 359-residue protein sequence, read N- to C-terminus: NADH-quinone oxidoreductase subunit H (359 aa).

The next 8 helical transmembrane spans lie at 19–39 (IGWF…FIAL), 94–114 (FLFV…FAVL), 127–147 (VGLF…LAAG), 175–195 (IALL…IILM), 202–222 (FLHW…IYFI), 255–275 (FAVI…IISI), 301–321 (VWGA…QMWL), and 337–357 (CWKV…IWVI).

Belongs to the complex I subunit 1 family. NDH-1 is composed of 14 different subunits. Subunits NuoA, H, J, K, L, M, N constitute the membrane sector of the complex.

Its subcellular location is the cell inner membrane. It carries out the reaction a quinone + NADH + 5 H(+)(in) = a quinol + NAD(+) + 4 H(+)(out). Functionally, NDH-1 shuttles electrons from NADH, via FMN and iron-sulfur (Fe-S) centers, to quinones in the respiratory chain. The immediate electron acceptor for the enzyme in this species is believed to be ubiquinone. Couples the redox reaction to proton translocation (for every two electrons transferred, four hydrogen ions are translocated across the cytoplasmic membrane), and thus conserves the redox energy in a proton gradient. This subunit may bind ubiquinone. The polypeptide is NADH-quinone oxidoreductase subunit H (Chlorobaculum tepidum (strain ATCC 49652 / DSM 12025 / NBRC 103806 / TLS) (Chlorobium tepidum)).